The sequence spans 227 residues: Cytochrome c oxidase subunit 2 (227 aa).

Residues 1 to 14 (MAYPFQLGLQDATS) lie on the Mitochondrial intermembrane side of the membrane. Residues 15–45 (PIMEELLHFHDHTLMIVFLISSLVLYIITLM) form a helical membrane-spanning segment. At 46–59 (LTTKLTHTSTMDAQ) the chain is on the mitochondrial matrix side. A helical membrane pass occupies residues 60-87 (EVETVWTILPAIILILIALPSLRILYMM). Topologically, residues 88–227 (DEINNPSLTV…YFETWSAVMV (140 aa)) are mitochondrial intermembrane. Residues His-161, Cys-196, Glu-198, Cys-200, His-204, and Met-207 each coordinate Cu cation. Glu-198 is a binding site for Mg(2+). At Tyr-218 the chain carries Phosphotyrosine.

It belongs to the cytochrome c oxidase subunit 2 family. As to quaternary structure, component of the cytochrome c oxidase (complex IV, CIV), a multisubunit enzyme composed of 14 subunits. The complex is composed of a catalytic core of 3 subunits MT-CO1, MT-CO2 and MT-CO3, encoded in the mitochondrial DNA, and 11 supernumerary subunits COX4I, COX5A, COX5B, COX6A, COX6B, COX6C, COX7A, COX7B, COX7C, COX8 and NDUFA4, which are encoded in the nuclear genome. The complex exists as a monomer or a dimer and forms supercomplexes (SCs) in the inner mitochondrial membrane with NADH-ubiquinone oxidoreductase (complex I, CI) and ubiquinol-cytochrome c oxidoreductase (cytochrome b-c1 complex, complex III, CIII), resulting in different assemblies (supercomplex SCI(1)III(2)IV(1) and megacomplex MCI(2)III(2)IV(2)). Found in a complex with TMEM177, COA6, COX18, COX20, SCO1 and SCO2. Interacts with TMEM177 in a COX20-dependent manner. Interacts with COX20. Interacts with COX16. It depends on Cu cation as a cofactor.

It is found in the mitochondrion inner membrane. It carries out the reaction 4 Fe(II)-[cytochrome c] + O2 + 8 H(+)(in) = 4 Fe(III)-[cytochrome c] + 2 H2O + 4 H(+)(out). Its function is as follows. Component of the cytochrome c oxidase, the last enzyme in the mitochondrial electron transport chain which drives oxidative phosphorylation. The respiratory chain contains 3 multisubunit complexes succinate dehydrogenase (complex II, CII), ubiquinol-cytochrome c oxidoreductase (cytochrome b-c1 complex, complex III, CIII) and cytochrome c oxidase (complex IV, CIV), that cooperate to transfer electrons derived from NADH and succinate to molecular oxygen, creating an electrochemical gradient over the inner membrane that drives transmembrane transport and the ATP synthase. Cytochrome c oxidase is the component of the respiratory chain that catalyzes the reduction of oxygen to water. Electrons originating from reduced cytochrome c in the intermembrane space (IMS) are transferred via the dinuclear copper A center (CU(A)) of subunit 2 and heme A of subunit 1 to the active site in subunit 1, a binuclear center (BNC) formed by heme A3 and copper B (CU(B)). The BNC reduces molecular oxygen to 2 water molecules using 4 electrons from cytochrome c in the IMS and 4 protons from the mitochondrial matrix. The protein is Cytochrome c oxidase subunit 2 (MT-CO2) of Vulpes vulpes (Red fox).